The sequence spans 380 residues: Outer membrane protein assembly factor BamB (380 aa).

The signal sequence occupies residues 1–18 (MVQWKHAALLALALAVVG). Cysteine 19 is lipidated: N-palmitoyl cysteine. Residue cysteine 19 is the site of S-diacylglycerol cysteine attachment.

It belongs to the BamB family. As to quaternary structure, part of the Bam complex.

The protein resides in the cell outer membrane. Part of the outer membrane protein assembly complex, which is involved in assembly and insertion of beta-barrel proteins into the outer membrane. This chain is Outer membrane protein assembly factor BamB, found in Pseudomonas aeruginosa (strain ATCC 15692 / DSM 22644 / CIP 104116 / JCM 14847 / LMG 12228 / 1C / PRS 101 / PAO1).